The sequence spans 803 residues: Protein translocase subunit SecA (803 aa).

ATP-binding positions include Gln-100, 118–122 (GEGKT), and Asp-508.

Belongs to the SecA family. Monomer and homodimer. Part of the essential Sec protein translocation apparatus which comprises SecA, SecYEG and auxiliary proteins SecDF. Other proteins may also be involved.

It is found in the cell membrane. Its subcellular location is the cytoplasm. The enzyme catalyses ATP + H2O + cellular proteinSide 1 = ADP + phosphate + cellular proteinSide 2.. Part of the Sec protein translocase complex. Interacts with the SecYEG preprotein conducting channel. Has a central role in coupling the hydrolysis of ATP to the transfer of proteins into and across the cell membrane, serving as an ATP-driven molecular motor driving the stepwise translocation of polypeptide chains across the membrane. The protein is Protein translocase subunit SecA of Leuconostoc mesenteroides subsp. mesenteroides (strain ATCC 8293 / DSM 20343 / BCRC 11652 / CCM 1803 / JCM 6124 / NCDO 523 / NBRC 100496 / NCIMB 8023 / NCTC 12954 / NRRL B-1118 / 37Y).